Consider the following 139-residue polypeptide: D-ribose pyranase (139 aa).

The active-site Proton donor is His-20. Residues Asp-28, His-106, and Tyr-128 to Asn-130 contribute to the substrate site.

It belongs to the RbsD / FucU family. RbsD subfamily. As to quaternary structure, homodecamer.

The protein localises to the cytoplasm. It carries out the reaction beta-D-ribopyranose = beta-D-ribofuranose. It participates in carbohydrate metabolism; D-ribose degradation; D-ribose 5-phosphate from beta-D-ribopyranose: step 1/2. In terms of biological role, catalyzes the interconversion of beta-pyran and beta-furan forms of D-ribose. This is D-ribose pyranase from Actinobacillus succinogenes (strain ATCC 55618 / DSM 22257 / CCUG 43843 / 130Z).